The chain runs to 156 residues: Cyanate hydratase (156 aa).

Catalysis depends on residues R96, E99, and S122.

The protein belongs to the cyanase family. As to quaternary structure, homodecamer composed of five homodimers.

The catalysed reaction is cyanate + hydrogencarbonate + 3 H(+) = NH4(+) + 2 CO2. Functionally, catalyzes the reaction of cyanate with bicarbonate to produce ammonia and carbon dioxide. The polypeptide is Cyanate hydratase (cynS) (Escherichia coli O157:H7).